We begin with the raw amino-acid sequence, 82 residues long: Small ribosomal subunit protein uS17 (82 aa).

It belongs to the universal ribosomal protein uS17 family. In terms of assembly, part of the 30S ribosomal subunit.

One of the primary rRNA binding proteins, it binds specifically to the 5'-end of 16S ribosomal RNA. This Nitrobacter hamburgensis (strain DSM 10229 / NCIMB 13809 / X14) protein is Small ribosomal subunit protein uS17.